The primary structure comprises 360 residues: Peptide chain release factor 1 (360 aa).

The residue at position 236 (glutamine 236) is an N5-methylglutamine. The segment at 288–308 (QDEQDAERKSTIGTGDRSERI) is disordered. The span at 293-308 (AERKSTIGTGDRSERI) shows a compositional bias: basic and acidic residues.

Belongs to the prokaryotic/mitochondrial release factor family. Methylated by PrmC. Methylation increases the termination efficiency of RF1.

The protein localises to the cytoplasm. In terms of biological role, peptide chain release factor 1 directs the termination of translation in response to the peptide chain termination codons UAG and UAA. The protein is Peptide chain release factor 1 of Streptococcus equi subsp. equi (strain 4047).